Consider the following 336-residue polypeptide: Dihydroorotate dehydrogenase (quinone) (336 aa).

FMN-binding positions include A62–K66 and T86. Substrate is bound at residue K66. N111 to F115 is a substrate binding site. Residues N139 and N172 each contribute to the FMN site. Residue N172 coordinates substrate. The active-site Nucleophile is the S175. N177 provides a ligand contact to substrate. Residues K217 and T245 each contribute to the FMN site. N246–T247 is a substrate binding site. Residues G268, G297, and Y318 to S319 contribute to the FMN site.

The protein belongs to the dihydroorotate dehydrogenase family. Type 2 subfamily. As to quaternary structure, monomer. FMN is required as a cofactor.

It localises to the cell membrane. It carries out the reaction (S)-dihydroorotate + a quinone = orotate + a quinol. The protein operates within pyrimidine metabolism; UMP biosynthesis via de novo pathway; orotate from (S)-dihydroorotate (quinone route): step 1/1. Catalyzes the conversion of dihydroorotate to orotate with quinone as electron acceptor. In Yersinia enterocolitica serotype O:8 / biotype 1B (strain NCTC 13174 / 8081), this protein is Dihydroorotate dehydrogenase (quinone).